The primary structure comprises 696 residues: MDADMDYERPNVETIKCVVVGDNAVGKTRLICARACNTTLTQYQLLATHVPTVWAIDQYRVCQEVLERSRDVVDEVSVSLRLWDTFGDHHKDRRFAYGRSDVVVLCFSIANPNSLNHVKSMWYPEIKHFCPRTPVILVGCQLDLRYADLEAVNRARRPLARPIKRGDILPPEKGREVAKELGLPYYETSVFDQFGIKDVFDNAIRAALISRRHLQFWKSHLKKVQKPLLQAPFLPPKAPPPVIKIPECPSMGTNEAACLLDNPLCADVLFILQDQEHIFAHRIYLATSSSKFYDLFLMECEESPNGSEGACEKEKQSRDFQGRILSVDPEEEREEGPPRIPQADQWKSSNKSLVEALGLEAEGAVPETQTLTGWSKGFIGMHREMQVNPISKRMGPMTVVRMDASVQPGPFRTLLQFLYTGQLDEKEKDLVGLAQIAEVLEMFDLRMMVENIMNKEAFMNQEITKAFHVRKANRIKECLSKGTFSDVTFKLDDGAISAHKPLLICSCEWMAAMFGGSFVESANSEVYLPNINKISMQAVLDYLYTKQLSPNLDLDPLELIALANRFCLPHLVALAEQHAVQELTKAATSGVGIDGEVLSYLELAQFHNAHQLAAWCLHHICTNYNSVCSKFRKEIKSKSADNQEYFERHRWPPVWYLKEEDHYQRVKREREKEDIALNKHRSRRKWCFWNSSPAVA.

The interval 1 to 210 (MDADMDYERP…DNAIRAALIS (210 aa)) is rho-like. Residues 21–28 (GDNAVGKT), 84–88 (DTFGD), and 140–143 (CQLD) contribute to the GTP site. BTB domains lie at 266–427 (ADVL…DEKE) and 485–552 (SDVT…SPNL). The segment at 327–348 (VDPEEEREEGPPRIPQADQWKS) is disordered.

This sequence belongs to the small GTPase superfamily. Rho family. Ubiquitous, with highest levels in skeletal muscle, placenta, testis, stomach, and kidney, followed by uterus and adrenal gland. Expressed in a variety of fetal tissues.

This chain is Rho-related BTB domain-containing protein 1 (RHOBTB1), found in Homo sapiens (Human).